We begin with the raw amino-acid sequence, 819 residues long: Ent-beyerene synthase KSL2, chloroplastic (819 aa).

Residues 1 to 58 constitute a chloroplast transit peptide; sequence MLPCLFPAYGSVVACKPSAIDRSPFGLLSQPKQTNRTLIRRPKVTKAFMAIEAMRHCS. A compositionally biased stretch (low complexity) spans 58–76; sequence SSSSSSEEGGAAATTAARS. The tract at residues 58–77 is disordered; that stretch reads SSSSSSEEGGAAATTAARSA. Residues D567, D571, N711, S715, and E719 each contribute to the Mg(2+) site. The short motif at 567–571 is the DDXXD motif element; it reads DDFFD.

This sequence belongs to the terpene synthase family. Mg(2+) is required as a cofactor. As to expression, expressed in roots. Highly expressed in stems, flowers and panicle.

Its subcellular location is the plastid. It localises to the chloroplast. It carries out the reaction ent-copalyl diphosphate = ent-beyerene + diphosphate. It catalyses the reaction ent-copalyl diphosphate = ent-kaur-16-ene + diphosphate. The protein operates within secondary metabolite biosynthesis; terpenoid biosynthesis. Its function is as follows. Diterpene cyclase involved in jasmonic acid-dependent defense mechanisms in roots by mediating the biosynthesis of labdane-related diterpenoids (LRDs) natural products such as ent-beyerene, an antimicrobial compound. Catalyzes the cyclization of ent-CDP into ent-beyerene as a major and ent-kaurene as a minor product. May be involved in the catalysis of an early step of the gibberellin (GA) biosynthesis pathway. In Oryza sativa subsp. japonica (Rice), this protein is Ent-beyerene synthase KSL2, chloroplastic.